We begin with the raw amino-acid sequence, 349 residues long: Alanine racemase (349 aa).

Lys-35 serves as the catalytic Proton acceptor; specific for D-alanine. An N6-(pyridoxal phosphate)lysine modification is found at Lys-35. Arg-130 serves as a coordination point for substrate. The active-site Proton acceptor; specific for L-alanine is the Tyr-244. Substrate is bound at residue Met-292.

The protein belongs to the alanine racemase family. The cofactor is pyridoxal 5'-phosphate.

The catalysed reaction is L-alanine = D-alanine. It participates in amino-acid biosynthesis; D-alanine biosynthesis; D-alanine from L-alanine: step 1/1. Its function is as follows. Catalyzes the interconversion of L-alanine and D-alanine. May also act on other amino acids. The protein is Alanine racemase (alr) of Cereibacter sphaeroides (strain KD131 / KCTC 12085) (Rhodobacter sphaeroides).